Reading from the N-terminus, the 276-residue chain is Protein TabB (276 aa).

This sequence belongs to the transferase hexapeptide repeat family. Pyridoxal 5'-phosphate serves as cofactor.

The sequence is that of Protein TabB (tabB) from Pseudomonas amygdali pv. tabaci (Pseudomonas syringae pv. tabaci).